A 337-amino-acid chain; its full sequence is Glyceraldehyde-3-phosphate dehydrogenase (337 aa).

NAD(+) contacts are provided by residues 12-13 (RI), Asp-36, Arg-80, and Ser-122. Residues 153–155 (SCT) and Thr-184 each bind D-glyceraldehyde 3-phosphate. Cys-154 functions as the Nucleophile in the catalytic mechanism. Asn-185 contributes to the NAD(+) binding site. D-glyceraldehyde 3-phosphate-binding positions include Arg-199, 212–213 (TG), and Arg-235. Asn-318 is an NAD(+) binding site.

The protein belongs to the glyceraldehyde-3-phosphate dehydrogenase family. As to quaternary structure, homotetramer.

It is found in the cytoplasm. It catalyses the reaction D-glyceraldehyde 3-phosphate + phosphate + NAD(+) = (2R)-3-phospho-glyceroyl phosphate + NADH + H(+). It functions in the pathway carbohydrate degradation; glycolysis; pyruvate from D-glyceraldehyde 3-phosphate: step 1/5. In terms of biological role, catalyzes the oxidative phosphorylation of glyceraldehyde 3-phosphate (G3P) to 1,3-bisphosphoglycerate (BPG) using the cofactor NAD. The first reaction step involves the formation of a hemiacetal intermediate between G3P and a cysteine residue, and this hemiacetal intermediate is then oxidized to a thioester, with concomitant reduction of NAD to NADH. The reduced NADH is then exchanged with the second NAD, and the thioester is attacked by a nucleophilic inorganic phosphate to produce BPG. In Zymomonas mobilis subsp. mobilis (strain ATCC 31821 / ZM4 / CP4), this protein is Glyceraldehyde-3-phosphate dehydrogenase (gap).